Consider the following 231-residue polypeptide: Transmembrane gamma-carboxyglutamic acid protein 3 (231 aa).

Positions 1-19 (MAVFLEAKDAHSVLKRFPR) are excised as a propeptide. The Gla domain maps to 20–65 (ANEFLEELRQGTIERECMEEICSYEEVKEVFENKEKTMEFWKGYPN). Topologically, residues 20 to 78 (ANEFLEELRQGTIERECMEEICSYEEVKEVFENKEKTMEFWKGYPNAVYSVRDPSQSSD) are extracellular. 13 positions are modified to 4-carboxyglutamate: Glu22, Glu25, Glu26, Glu33, Glu35, Glu38, Glu39, Glu44, Glu45, Glu48, Glu51, Glu54, and Glu58. A disulfide bridge connects residues Cys36 and Cys41. A helical transmembrane segment spans residues 79–101 (AMYVVVPLLGVALLIVIALFIIW). Residues 102-231 (RCQLQKATRH…IVAANPGADK (130 aa)) lie on the Cytoplasmic side of the membrane. Disordered stretches follow at residues 140–165 (HSQGEPSGHREAANSPQVVLGPSRGG) and 182–231 (LSRL…GADK). Residues 202–213 (ESSSEEASVSYS) show a composition bias toward low complexity.

Gla residues are produced after subsequent post-translational modifications of glutamate by a vitamin K-dependent gamma-carboxylase. Expressed in brain, lung, kidney and heart.

Its subcellular location is the membrane. This chain is Transmembrane gamma-carboxyglutamic acid protein 3 (PRRG3), found in Homo sapiens (Human).